Consider the following 739-residue polypeptide: MEHTFQYAWVIPFVPLPVTMSIGLGLLLVPTATKNLRRMWAFPSVLLLSITMVFSSNLSIQQINGSFIYQYLWSWTINNDFSLEFGYLIDPLTSIMSILITTVGIVVLIYSDNYMSHDQGYLRFLSYMSFSNTSMLGLVTSSNLIQIHIFWELVGMCSYLLIGFWSTRTVAANACQKAFVTNRIGDFGLLLGILGLYWITGSFEFRDLFEIFKNLIHSNGVHFVFATLCASLLFVGAVAKSAQFPLHVWLPDAMEVPTPISALIHAATMVAAGIFLVARLLPIFTVIPYIMNLIALIGVITVLLGATLALAQRDIKRSLAYSTMSQLGYTMLALGIGSYRAALFHLITHAYSKALLFLGSGSIIHSMEPIVGYSPDKSQNMVLMGGLRKYIPITKTTFLLGTFSLCGIPPLACFWSKDEILNDSWLYSPIFAIIAYSTAGLTAFYMFRMYLLTFEGHLHIHFQNYNSIKNGSLYSISIWGKEGPKPVKINFVLSTMNNNEKVSFFSKKTYQIDGNVRNLMRSFSIHFYNKETSVYPQESDNTMLFPLLVLVLFTLFVGSIGISGVTDMDFDILSKWLTPSINLLHKNLSYSPDWYEFFINAIFSVSISYFGILIAFLLYGSVYSSFQNLDLINLFVKTGSKKILLDRIKNVIYNWSYNRGYIDVFYATALTRGIRGLAQLTHFFDRRAIDGITNGVGVASFFVGEGIKYVGGGRISSYLFLYLFYIIIIIFLLIFWSLI.

15 helical membrane passes run 9-29, 40-60, 89-109, 144-164, 184-204, 219-239, 258-278, 280-300, 327-347, 354-374, 396-416, 425-445, 542-562, 597-617, and 719-739; these read WVIP…LLLV, WAFP…NLSI, IDPL…VVLI, LIQI…LIGF, IGDF…GSFE, NGVH…GAVA, TPIS…FLVA, LLPI…IGVI, LGYT…FHLI, ALLF…VGYS, TTFL…CFWS, WLYS…TAFY, TMLF…SIGI, FFIN…IAFL, and LFLY…WSLI.

Belongs to the complex I subunit 5 family. As to quaternary structure, NDH is composed of at least 16 different subunits, 5 of which are encoded in the nucleus.

It localises to the plastid. The protein localises to the chloroplast thylakoid membrane. The catalysed reaction is a plastoquinone + NADH + (n+1) H(+)(in) = a plastoquinol + NAD(+) + n H(+)(out). It carries out the reaction a plastoquinone + NADPH + (n+1) H(+)(in) = a plastoquinol + NADP(+) + n H(+)(out). In terms of biological role, NDH shuttles electrons from NAD(P)H:plastoquinone, via FMN and iron-sulfur (Fe-S) centers, to quinones in the photosynthetic chain and possibly in a chloroplast respiratory chain. The immediate electron acceptor for the enzyme in this species is believed to be plastoquinone. Couples the redox reaction to proton translocation, and thus conserves the redox energy in a proton gradient. This Chloranthus spicatus (Chulantree) protein is NAD(P)H-quinone oxidoreductase subunit 5, chloroplastic (ndhF).